We begin with the raw amino-acid sequence, 474 residues long: Transcription termination factor Rho (474 aa).

Positions 1-60 (MTEELDNTPSPAGDIPQETLPKPLPAPEETAGEQPAAAPEENRGNAVREEEEAAPVLEQI) are disordered. Residues 107-182 (EVVVSGVMEQ…ASVISVEDIP (76 aa)) enclose the Rho RNA-BD domain. ATP is bound by residues 226 to 231 (GKGQRG), 238 to 243 (RGGKTV), and arginine 269.

The protein belongs to the Rho family. Homohexamer. The homohexamer assembles into an open ring structure.

Its function is as follows. Facilitates transcription termination by a mechanism that involves Rho binding to the nascent RNA, activation of Rho's RNA-dependent ATPase activity, and release of the mRNA from the DNA template. This is Transcription termination factor Rho from Akkermansia muciniphila (strain ATCC BAA-835 / DSM 22959 / JCM 33894 / BCRC 81048 / CCUG 64013 / CIP 107961 / Muc).